A 49-amino-acid polypeptide reads, in one-letter code: Large ribosomal subunit protein bL33 (49 aa).

The protein belongs to the bacterial ribosomal protein bL33 family.

The polypeptide is Large ribosomal subunit protein bL33 (Clostridium perfringens (strain ATCC 13124 / DSM 756 / JCM 1290 / NCIMB 6125 / NCTC 8237 / Type A)).